A 546-amino-acid polypeptide reads, in one-letter code: Protein HydE (546 aa).

In Wolinella succinogenes (strain ATCC 29543 / DSM 1740 / CCUG 13145 / JCM 31913 / LMG 7466 / NCTC 11488 / FDC 602W) (Vibrio succinogenes), this protein is Protein HydE (hydE).